A 117-amino-acid chain; its full sequence is NADH-ubiquinone oxidoreductase chain 3 (117 aa).

3 consecutive transmembrane segments (helical) span residues 1–21 (MLSL…LLLV), 56–76 (FFLV…ILPY), and 86–106 (TFYN…GLMY).

Belongs to the complex I subunit 3 family.

It is found in the mitochondrion membrane. It carries out the reaction a ubiquinone + NADH + 5 H(+)(in) = a ubiquinol + NAD(+) + 4 H(+)(out). Functionally, core subunit of the mitochondrial membrane respiratory chain NADH dehydrogenase (Complex I) that is believed to belong to the minimal assembly required for catalysis. Complex I functions in the transfer of electrons from NADH to the respiratory chain. The immediate electron acceptor for the enzyme is believed to be ubiquinone. This Branchiostoma lanceolatum (Common lancelet) protein is NADH-ubiquinone oxidoreductase chain 3 (ND3).